Here is a 286-residue protein sequence, read N- to C-terminus: 4-hydroxybenzoate octaprenyltransferase (286 aa).

A run of 7 helical transmembrane segments spans residues 21-40, 96-116, 142-162, 167-187, 210-230, 235-255, and 266-286; these read GTLLLLWPCLMALVLAAGGM, LFVILGLAAFGLVLLLNGLVV, FLGVVWSWSIPMAYAAQTGEV, WWLFAANWFWTVAYDTMYAMV, QIIGLFQLAALLCFIAAGWSA, LYGLGLLTFVGFSTYQQMLIF, and FLNNNWAGLALFVGLGADYLF.

Belongs to the UbiA prenyltransferase family. Mg(2+) is required as a cofactor.

The protein localises to the cell inner membrane. It carries out the reaction all-trans-octaprenyl diphosphate + 4-hydroxybenzoate = 4-hydroxy-3-(all-trans-octaprenyl)benzoate + diphosphate. It functions in the pathway cofactor biosynthesis; ubiquinone biosynthesis. Catalyzes the prenylation of para-hydroxybenzoate (PHB) with an all-trans polyprenyl group. Mediates the second step in the final reaction sequence of ubiquinone-8 (UQ-8) biosynthesis, which is the condensation of the polyisoprenoid side chain with PHB, generating the first membrane-bound Q intermediate 3-octaprenyl-4-hydroxybenzoate. The chain is 4-hydroxybenzoate octaprenyltransferase from Shewanella sp. (strain ANA-3).